The primary structure comprises 148 residues: Deoxyuridine 5'-triphosphate nucleotidohydrolase (148 aa).

Residues 67 to 69, Asn-80, 84 to 86, and Met-94 contribute to the substrate site; these read RSG and LID.

The protein belongs to the dUTPase family. The cofactor is Mg(2+).

It catalyses the reaction dUTP + H2O = dUMP + diphosphate + H(+). The protein operates within pyrimidine metabolism; dUMP biosynthesis; dUMP from dCTP (dUTP route): step 2/2. In terms of biological role, this enzyme is involved in nucleotide metabolism: it produces dUMP, the immediate precursor of thymidine nucleotides and it decreases the intracellular concentration of dUTP so that uracil cannot be incorporated into DNA. The protein is Deoxyuridine 5'-triphosphate nucleotidohydrolase of Burkholderia multivorans (strain ATCC 17616 / 249).